A 520-amino-acid polypeptide reads, in one-letter code: Developmental regulatory protein wetA (520 aa).

3 stretches are compositionally biased toward polar residues: residues 109 to 118, 155 to 165, and 378 to 392; these read TATHALSISP, QSFSPSLMRSS, and SSQK…SQVH. 3 disordered regions span residues 109-165, 378-454, and 468-496; these read TATH…MRSS, SSQK…SNKS, and KKIL…RRRK. A compositionally biased stretch (basic residues) spans 420–429; it reads PTHRRTHSRK. The span at 445 to 454 shows a compositional bias: low complexity; sequence SSSSRGSNKS.

The protein belongs to the wetA family.

In terms of biological role, brlA, abaA and wetA are pivotal regulators of conidiophore development and conidium maturation. They act individually and together to regulate their own expression and that of numerous other sporulation-specific genes. The polypeptide is Developmental regulatory protein wetA (Penicillium roqueforti (strain FM164)).